Here is a 299-residue protein sequence, read N- to C-terminus: Bifunctional protein FolD (299 aa).

NADP(+)-binding positions include 168 to 170 (GRS), Ser193, and Ile234.

This sequence belongs to the tetrahydrofolate dehydrogenase/cyclohydrolase family. As to quaternary structure, homodimer.

It carries out the reaction (6R)-5,10-methylene-5,6,7,8-tetrahydrofolate + NADP(+) = (6R)-5,10-methenyltetrahydrofolate + NADPH. It catalyses the reaction (6R)-5,10-methenyltetrahydrofolate + H2O = (6R)-10-formyltetrahydrofolate + H(+). The protein operates within one-carbon metabolism; tetrahydrofolate interconversion. Its function is as follows. Catalyzes the oxidation of 5,10-methylenetetrahydrofolate to 5,10-methenyltetrahydrofolate and then the hydrolysis of 5,10-methenyltetrahydrofolate to 10-formyltetrahydrofolate. The protein is Bifunctional protein FolD of Rhizobium johnstonii (strain DSM 114642 / LMG 32736 / 3841) (Rhizobium leguminosarum bv. viciae).